We begin with the raw amino-acid sequence, 432 residues long: 3-phosphoshikimate 1-carboxyvinyltransferase (432 aa).

The 3-phosphoshikimate site is built by Lys-21, Ser-22, and Arg-26. Residue Lys-21 participates in phosphoenolpyruvate binding. Gly-94 and Arg-122 together coordinate phosphoenolpyruvate. Positions 168, 170, 317, and 344 each coordinate 3-phosphoshikimate. Gln-170 contacts phosphoenolpyruvate. The active-site Proton acceptor is the Asp-317. Positions 348 and 391 each coordinate phosphoenolpyruvate.

Belongs to the EPSP synthase family. As to quaternary structure, monomer.

It is found in the cytoplasm. The enzyme catalyses 3-phosphoshikimate + phosphoenolpyruvate = 5-O-(1-carboxyvinyl)-3-phosphoshikimate + phosphate. It functions in the pathway metabolic intermediate biosynthesis; chorismate biosynthesis; chorismate from D-erythrose 4-phosphate and phosphoenolpyruvate: step 6/7. Its function is as follows. Catalyzes the transfer of the enolpyruvyl moiety of phosphoenolpyruvate (PEP) to the 5-hydroxyl of shikimate-3-phosphate (S3P) to produce enolpyruvyl shikimate-3-phosphate and inorganic phosphate. This chain is 3-phosphoshikimate 1-carboxyvinyltransferase, found in Petrotoga mobilis (strain DSM 10674 / SJ95).